Reading from the N-terminus, the 247-residue chain is Probable dihydroorotate dehydrogenase B (NAD(+)), electron transfer subunit (247 aa).

An FAD-binding FR-type domain is found at 1–87 (MLRRVTLKET…RGPYGNGFKE (87 aa)). Residues cysteine 200, cysteine 205, cysteine 208, and cysteine 216 each contribute to the [2Fe-2S] cluster site.

The protein belongs to the PyrK family. In terms of assembly, heterotetramer of 2 PyrK and 2 PyrD type B subunits. [2Fe-2S] cluster serves as cofactor. FAD is required as a cofactor.

Its pathway is pyrimidine metabolism; UMP biosynthesis via de novo pathway; orotate from (S)-dihydroorotate (NAD(+) route): step 1/1. Its function is as follows. Responsible for channeling the electrons from the oxidation of dihydroorotate from the FMN redox center in the PyrD type B subunit to the ultimate electron acceptor NAD(+). The chain is Probable dihydroorotate dehydrogenase B (NAD(+)), electron transfer subunit from Pyrococcus horikoshii (strain ATCC 700860 / DSM 12428 / JCM 9974 / NBRC 100139 / OT-3).